We begin with the raw amino-acid sequence, 273 residues long: 4-hydroxy-tetrahydrodipicolinate reductase (273 aa).

NAD(+) is bound by residues 11-16 (GAGGRM) and E36. An NADP(+)-binding site is contributed by R37. NAD(+) is bound by residues 100-102 (GTT) and 124-127 (AANY). The active-site Proton donor/acceptor is the H157. H158 is a binding site for (S)-2,3,4,5-tetrahydrodipicolinate. K161 functions as the Proton donor in the catalytic mechanism. 167–168 (GT) contributes to the (S)-2,3,4,5-tetrahydrodipicolinate binding site.

It belongs to the DapB family.

Its subcellular location is the cytoplasm. It catalyses the reaction (S)-2,3,4,5-tetrahydrodipicolinate + NAD(+) + H2O = (2S,4S)-4-hydroxy-2,3,4,5-tetrahydrodipicolinate + NADH + H(+). It carries out the reaction (S)-2,3,4,5-tetrahydrodipicolinate + NADP(+) + H2O = (2S,4S)-4-hydroxy-2,3,4,5-tetrahydrodipicolinate + NADPH + H(+). It functions in the pathway amino-acid biosynthesis; L-lysine biosynthesis via DAP pathway; (S)-tetrahydrodipicolinate from L-aspartate: step 4/4. Functionally, catalyzes the conversion of 4-hydroxy-tetrahydrodipicolinate (HTPA) to tetrahydrodipicolinate. This Acinetobacter baumannii (strain ACICU) protein is 4-hydroxy-tetrahydrodipicolinate reductase.